A 337-amino-acid polypeptide reads, in one-letter code: tRNA-cytidine(32) 2-sulfurtransferase (337 aa).

The PP-loop motif motif lies at 71–76 (SGGKDS). [4Fe-4S] cluster contacts are provided by Cys-146, Cys-149, and Cys-237.

It belongs to the TtcA family. In terms of assembly, homodimer. It depends on Mg(2+) as a cofactor. [4Fe-4S] cluster is required as a cofactor.

It localises to the cytoplasm. It carries out the reaction cytidine(32) in tRNA + S-sulfanyl-L-cysteinyl-[cysteine desulfurase] + AH2 + ATP = 2-thiocytidine(32) in tRNA + L-cysteinyl-[cysteine desulfurase] + A + AMP + diphosphate + H(+). The protein operates within tRNA modification. In terms of biological role, catalyzes the ATP-dependent 2-thiolation of cytidine in position 32 of tRNA, to form 2-thiocytidine (s(2)C32). The sulfur atoms are provided by the cysteine/cysteine desulfurase (IscS) system. In Burkholderia vietnamiensis (strain G4 / LMG 22486) (Burkholderia cepacia (strain R1808)), this protein is tRNA-cytidine(32) 2-sulfurtransferase.